Reading from the N-terminus, the 396-residue chain is Ribosomal RNA small subunit methyltransferase H (396 aa).

Residues 101-103 (GGH), D120, Y147, D171, and Q178 contribute to the S-adenosyl-L-methionine site.

It belongs to the methyltransferase superfamily. RsmH family.

It is found in the cytoplasm. The catalysed reaction is cytidine(1402) in 16S rRNA + S-adenosyl-L-methionine = N(4)-methylcytidine(1402) in 16S rRNA + S-adenosyl-L-homocysteine + H(+). Its function is as follows. Specifically methylates the N4 position of cytidine in position 1402 (C1402) of 16S rRNA. This Mycobacterium bovis (strain ATCC BAA-935 / AF2122/97) protein is Ribosomal RNA small subunit methyltransferase H.